A 570-amino-acid polypeptide reads, in one-letter code: Sulfite reductase [NADPH] hemoprotein beta-component (570 aa).

[4Fe-4S] cluster-binding residues include C434, C440, C479, and C483. C483 lines the siroheme pocket.

Belongs to the nitrite and sulfite reductase 4Fe-4S domain family. Alpha(8)-beta(8). The alpha component is a flavoprotein, the beta component is a hemoprotein. Siroheme serves as cofactor. Requires [4Fe-4S] cluster as cofactor.

The enzyme catalyses hydrogen sulfide + 3 NADP(+) + 3 H2O = sulfite + 3 NADPH + 4 H(+). It participates in sulfur metabolism; hydrogen sulfide biosynthesis; hydrogen sulfide from sulfite (NADPH route): step 1/1. In terms of biological role, component of the sulfite reductase complex that catalyzes the 6-electron reduction of sulfite to sulfide. This is one of several activities required for the biosynthesis of L-cysteine from sulfate. The chain is Sulfite reductase [NADPH] hemoprotein beta-component from Escherichia coli (strain SMS-3-5 / SECEC).